The chain runs to 152 residues: MTIWVDADACPNVIKEILYRAAERMQMPLVLVANQSLRVPPSRFIRTLRVAAGFDVADNEIVRQCEAGDLVITADIPLAAEAIEKGAAALNPRGERYTPATIRERLTMRDFMDTLRASGIQTGGPDSLSQRDRQAFAAELEKWWLEVQRSRG.

The protein belongs to the UPF0178 family.

This is UPF0178 protein YaiI from Escherichia coli O6:K15:H31 (strain 536 / UPEC).